We begin with the raw amino-acid sequence, 108 residues long: MAARKTYILKLYVAGNTPNSMRALNTLKEILENEFKGVYALKVIDVLKQPQLAEEDKILATPTLAKILPPPVRRIIGDLSDREKVLIGLDLLFDELSESELNGGKKNK.

It belongs to the KaiB family. As to quaternary structure, may undergo a major conformational rearrangment; in the free state forms homooligomers. When bound to KaiC switches to a monomeric thioredoxin-fold (KaiB(fs)). The active oscillator complex is probably KaiC(6):KaiB(6).

In terms of biological role, component of the KaiBC clock protein complex, which constitutes the main circadian regulator in cyanobacteria; it may modify the ATPase activity of KaiC. Its function is as follows. May be a metamorphic protein which reversibly switches between an inactive tetrameric fold and a rare, thioredoxin-like monomeric fold (KaiB(fs)). KaiB(fs) binds phospho-KaiC, and perhaps clock output effectors. The chain is Circadian clock oscillator protein KaiB from Prochlorococcus marinus (strain MIT 9515).